Consider the following 211-residue polypeptide: Claudin-1 (211 aa).

At 1 to 7 (MANAGLQ) the chain is on the cytoplasmic side. Residues 8–28 (LLGFILASLGWIGSIVSTALP) traverse the membrane as a helical segment. At 29–81 (QWKIYSYAGDNIVTAQAIYEGLWMSCVSQSTGQIQCKVFDSLLNLNSTLQATR) the chain is on the extracellular side. Cysteine 54 and cysteine 64 form a disulfide bridge. The helical transmembrane segment at 82–102 (ALMVIGILLGLIAIFVSTIGM) threads the bilayer. Over 103-115 (KCMRCLEDDEVQK) the chain is Cytoplasmic. Residues 116 to 136 (MWMAVIGGIIFLISGLATLVA) traverse the membrane as a helical segment. Over 137 to 163 (TAWYGNRIVQEFYDPLTPINARYEFGQ) the chain is Extracellular. Residues 164 to 184 (ALFTGWAAASLCLLGGVLLSC) form a helical membrane-spanning segment. Over 185–211 (SCPRKTTSYPTPRPYPKPTPSSGKDYV) the chain is Cytoplasmic. Residues 190 to 211 (TTSYPTPRPYPKPTPSSGKDYV) form a disordered region. The tract at residues 210–211 (YV) is interactions with TJP1, TJP2, TJP3 and PATJ.

It belongs to the claudin family. Can form homo- and heteropolymers with other CLDN. Homopolymers interact with CLDN3, but not CLDN2, homopolymers. Directly interacts with TJP1/ZO-1, TJP2/ZO-2 and TJP3/ZO-3. Interacts with MPDZ and PATJ. Interacts with OCLN, CD81, CLDN4, CLDN6 and CLDN9. In terms of tissue distribution, detected in epidermis and liver (at protein level). Widely expressed, with highest levels in liver and kidney.

The protein resides in the cell junction. It is found in the tight junction. The protein localises to the cell membrane. Its subcellular location is the basolateral cell membrane. Claudins function as major constituents of the tight junction complexes that regulate the permeability of epithelia. While some claudin family members play essential roles in the formation of impermeable barriers, others mediate the permeability to ions and small molecules. Often, several claudin family members are coexpressed and interact with each other, and this determines the overall permeability. CLDN1 is required to prevent the paracellular diffusion of small molecules through tight junctions in the epidermis and is required for the normal barrier function of the skin. Required for normal water homeostasis and to prevent excessive water loss through the skin, probably via an indirect effect on the expression levels of other proteins, since CLDN1 itself seems to be dispensable for water barrier formation in keratinocyte tight junctions. This is Claudin-1 (Cldn1) from Mus musculus (Mouse).